A 1056-amino-acid polypeptide reads, in one-letter code: Isoleucine--tRNA ligase (1056 aa).

The 'HIGH' region motif lies at 56–66 (PFATGLPHYGH). Positions 603 to 607 (KMSKS) match the 'KMSKS' region motif. K606 contributes to the ATP binding site.

The protein belongs to the class-I aminoacyl-tRNA synthetase family. IleS type 2 subfamily. In terms of assembly, monomer. Zn(2+) serves as cofactor.

The protein localises to the cytoplasm. The enzyme catalyses tRNA(Ile) + L-isoleucine + ATP = L-isoleucyl-tRNA(Ile) + AMP + diphosphate. Catalyzes the attachment of isoleucine to tRNA(Ile). As IleRS can inadvertently accommodate and process structurally similar amino acids such as valine, to avoid such errors it has two additional distinct tRNA(Ile)-dependent editing activities. One activity is designated as 'pretransfer' editing and involves the hydrolysis of activated Val-AMP. The other activity is designated 'posttransfer' editing and involves deacylation of mischarged Val-tRNA(Ile). The polypeptide is Isoleucine--tRNA ligase (Bdellovibrio bacteriovorus (strain ATCC 15356 / DSM 50701 / NCIMB 9529 / HD100)).